Consider the following 309-residue polypeptide: Homoserine O-succinyltransferase (309 aa).

The Acyl-thioester intermediate role is filled by Cys-142. Residues Lys-163 and Ser-192 each contribute to the substrate site. His-235 acts as the Proton acceptor in catalysis. Glu-237 is an active-site residue. Residue Arg-249 participates in substrate binding.

This sequence belongs to the MetA family. As to quaternary structure, homodimer.

It is found in the cytoplasm. It carries out the reaction L-homoserine + succinyl-CoA = O-succinyl-L-homoserine + CoA. It participates in amino-acid biosynthesis; L-methionine biosynthesis via de novo pathway; O-succinyl-L-homoserine from L-homoserine: step 1/1. In terms of biological role, transfers a succinyl group from succinyl-CoA to L-homoserine, forming succinyl-L-homoserine. The sequence is that of Homoserine O-succinyltransferase from Escherichia coli (strain K12 / MC4100 / BW2952).